Consider the following 504-residue polypeptide: TGF-beta-activated kinase 1 and MAP3K7-binding protein 1 (504 aa).

Positions 1 to 22 are disordered; it reads MAAQRRSLLQSEQQPSWTDDLP. The residue at position 7 (Ser-7) is a Phosphoserine. The span at 7–17 shows a compositional bias: polar residues; that stretch reads SLLQSEQQPSW. A PPM-type phosphatase domain is found at 28–365; the sequence is GVGSASNRSY…EDMTLLVRNF (338 aa). Phosphoserine is present on Ser-378. Ser-395 carries O-linked (GlcNAc) serine glycosylation. The residue at position 423 (Ser-423) is a Phosphoserine; by MAPK14. Polar residues predominate over residues 430–439; sequence ATPTLTNQSP. Residues 430–478 are disordered; it reads ATPTLTNQSPTLTLQSTNTHTQSSSSSSDGGLFRSRPAHSLPPGEDGRV. The residue at position 431 (Thr-431) is a Phosphothreonine; by MAPK14. A Phosphoserine; by MAPK14 modification is found at Ser-438. Low complexity predominate over residues 440 to 457; it reads TLTLQSTNTHTQSSSSSS. Thr-442 is modified (phosphothreonine).

As to quaternary structure, interacts with XIAP and BIRC7. Interacts with TRAF6 and MAP3K7; during IL-1 signaling. Identified in the TRIKA2 complex composed of MAP3K7, TAB1 and TAB2. Interacts with TRAF6 and MAPK14; these interactions allow MAPK14 autophosphorylation. Interacts with STING1; interaction takes place following cGAMP activation and promotes TAB1 recruitment to the endoplasmic reticulum, triggering MAP3K7/TAK1 activation and STING1 phosphorylation. In terms of processing, phosphorylated at all three sites Ser-423, Thr-431 and Ser-438 by MAPK14 when cells were exposed to cellular stresses, or stimulated with TNF-alpha, IL1 or LPS. These phosphorylations inhibit TAK1 activation by a feedback control mechanism. Dephosphorylated by DUSP14 at Ser-438, leading to TAB1-MAP3K7/TAK1 complex inactivation in T-cells. Post-translationally, ubiquitinated by MAP3K1 with 'Lys-63'-linked polyubiquitin; leading to activation of TAK1 and of JNK and p38 MAP kinases following EGF and TGF-beta stimulation. Ubiquitinated by ITCH with 'Lys-48'-linked polyubiquitin; leading to proteasomal degradation. Ubiquitinated by RNF114 during maternal-to-zygotic transition; leading to degradation. (Microbial infection) Deubiquitinated by Y.enterocolitica YopP. In terms of processing, O-GlcNAcylated at Ser-395 by OGT is required for full MAP3K7/TAK1 activation upon stimulation with IL-1 or osmotic stress. Deglycosylated at Ser-395 by OGA. Ubiquitous.

The protein resides in the cytoplasm. The protein localises to the cytosol. It is found in the endoplasmic reticulum membrane. Its function is as follows. Key adapter protein that plays an essential role in JNK and NF-kappa-B activation and proinflammatory cytokines production in response to stimulation with TLRs and cytokines. Mechanistically, associates with the catalytic domain of MAP3K7/TAK1 to trigger MAP3K7/TAK1 autophosphorylation leading to its full activation. Similarly, associates with MAPK14 and triggers its autophosphorylation and subsequent activation. In turn, MAPK14 phosphorylates TAB1 and inhibits MAP3K7/TAK1 activation in a feedback control mechanism. Also plays a role in recruiting MAPK14 to the TAK1 complex for the phosphorylation of the TAB2 and TAB3 regulatory subunits. The polypeptide is TGF-beta-activated kinase 1 and MAP3K7-binding protein 1 (TAB1) (Homo sapiens (Human)).